The sequence spans 536 residues: Phosphoenolpyruvate carboxykinase (ATP) (536 aa).

Residues Arg-61, Tyr-195, and Lys-201 each contribute to the substrate site. ATP contacts are provided by residues Lys-201, His-220, and 236-244 (GLSGTGKTT). Mn(2+) contacts are provided by Lys-201 and His-220. Asp-257 lines the Mn(2+) pocket. Glu-285, Arg-322, and Thr-447 together coordinate ATP. Arg-322 contributes to the substrate binding site.

Belongs to the phosphoenolpyruvate carboxykinase (ATP) family. The cofactor is Mn(2+).

The protein localises to the cytoplasm. The catalysed reaction is oxaloacetate + ATP = phosphoenolpyruvate + ADP + CO2. The protein operates within carbohydrate biosynthesis; gluconeogenesis. In terms of biological role, involved in the gluconeogenesis. Catalyzes the conversion of oxaloacetate (OAA) to phosphoenolpyruvate (PEP) through direct phosphoryl transfer between the nucleoside triphosphate and OAA. This is Phosphoenolpyruvate carboxykinase (ATP) from Rhizobium leguminosarum bv. trifolii (strain WSM2304).